The sequence spans 93 residues: U12-lycotoxin-Ls1d (93 aa).

The N-terminal stretch at 1–18 is a signal peptide; sequence MKFAVILLFSLVVLAVAS. A propeptide spanning residues 19 to 38 is cleaved from the precursor; it reads ESVEEVRREIDIEDLPEQQR.

It belongs to the neurotoxin 31 family. Post-translationally, contains 5 disulfide bonds. As to expression, expressed by the venom gland.

It is found in the secreted. The sequence is that of U12-lycotoxin-Ls1d from Lycosa singoriensis (Wolf spider).